The chain runs to 534 residues: CTP synthase (534 aa).

The segment at 1–268 (MAAKYIFVTG…DQIVCDHLQL (268 aa)) is amidoligase domain. Serine 14 is a CTP binding site. Serine 14 contributes to the UTP binding site. 15 to 20 (SLGKGI) is a binding site for ATP. Tyrosine 55 lines the L-glutamine pocket. ATP is bound at residue aspartate 72. Aspartate 72 and glutamate 142 together coordinate Mg(2+). CTP is bound by residues 149–151 (DIE), 189–194 (KSKPTQ), and lysine 225. UTP contacts are provided by residues 189–194 (KSKPTQ) and lysine 225. Residues 293–534 (RIAIVGKYVE…FVRNALAAQA (242 aa)) form the Glutamine amidotransferase type-1 domain. Glycine 355 contacts L-glutamine. Cysteine 382 acts as the Nucleophile; for glutamine hydrolysis in catalysis. Residues 383-386 (LGMQ), glutamate 406, and arginine 463 each bind L-glutamine. Residues histidine 508 and glutamate 510 contribute to the active site.

Belongs to the CTP synthase family. Homotetramer.

It carries out the reaction UTP + L-glutamine + ATP + H2O = CTP + L-glutamate + ADP + phosphate + 2 H(+). The catalysed reaction is L-glutamine + H2O = L-glutamate + NH4(+). It catalyses the reaction UTP + NH4(+) + ATP = CTP + ADP + phosphate + 2 H(+). The protein operates within pyrimidine metabolism; CTP biosynthesis via de novo pathway; CTP from UDP: step 2/2. Allosterically activated by GTP, when glutamine is the substrate; GTP has no effect on the reaction when ammonia is the substrate. The allosteric effector GTP functions by stabilizing the protein conformation that binds the tetrahedral intermediate(s) formed during glutamine hydrolysis. Inhibited by the product CTP, via allosteric rather than competitive inhibition. In terms of biological role, catalyzes the ATP-dependent amination of UTP to CTP with either L-glutamine or ammonia as the source of nitrogen. Regulates intracellular CTP levels through interactions with the four ribonucleotide triphosphates. In Shouchella clausii (strain KSM-K16) (Alkalihalobacillus clausii), this protein is CTP synthase.